A 101-amino-acid polypeptide reads, in one-letter code: Small ribosomal subunit protein uS14 (101 aa).

This sequence belongs to the universal ribosomal protein uS14 family. As to quaternary structure, part of the 30S ribosomal subunit. Contacts proteins S3 and S10.

Functionally, binds 16S rRNA, required for the assembly of 30S particles and may also be responsible for determining the conformation of the 16S rRNA at the A site. The polypeptide is Small ribosomal subunit protein uS14 (Acinetobacter baumannii (strain AB307-0294)).